The chain runs to 204 residues: MQKFTTFTSIAIPLERANIDTDAIIPKQFLKSIKRSGFGVNLFDEWRYLDHGEVGMDNSKRPLNMDFVLNQAKYQGAKILLVRENFGCGSSREHAPWALEDYGFKAIIAPSFADIFYNNCFKNGILPIVQDNNIMDEFFTLSGEIMINLDAQSIHTNSKTYFFEIDIERKRRLINGLDDIGLTLQYTDDIKAFEKDYFNKYNWL.

Belongs to the LeuD family. LeuD type 1 subfamily. As to quaternary structure, heterodimer of LeuC and LeuD.

The catalysed reaction is (2R,3S)-3-isopropylmalate = (2S)-2-isopropylmalate. Its pathway is amino-acid biosynthesis; L-leucine biosynthesis; L-leucine from 3-methyl-2-oxobutanoate: step 2/4. Functionally, catalyzes the isomerization between 2-isopropylmalate and 3-isopropylmalate, via the formation of 2-isopropylmaleate. The polypeptide is 3-isopropylmalate dehydratase small subunit (Ruthia magnifica subsp. Calyptogena magnifica).